A 302-amino-acid polypeptide reads, in one-letter code: Glutaminase (302 aa).

Substrate is bound by residues Ser-61, Asn-111, Glu-155, Asn-162, Tyr-186, Tyr-238, and Val-256.

It belongs to the glutaminase family. In terms of assembly, homotetramer.

It catalyses the reaction L-glutamine + H2O = L-glutamate + NH4(+). In Pseudomonas aeruginosa (strain LESB58), this protein is Glutaminase.